The sequence spans 305 residues: Dihydroorotate dehydrogenase B (NAD(+)), catalytic subunit (305 aa).

Residues S23 and 47–48 (KG) each bind FMN. Residues K47 and 71 to 75 (NAIGL) contribute to the substrate site. FMN-binding residues include N101 and N129. Substrate is bound at residue N129. C132 functions as the Nucleophile in the catalytic mechanism. Positions 167 and 193 each coordinate FMN. A substrate-binding site is contributed by 194–195 (NT). Residues G219, 245–246 (GG), and 267–268 (GT) contribute to the FMN site.

The protein belongs to the dihydroorotate dehydrogenase family. Type 1 subfamily. In terms of assembly, heterotetramer of 2 PyrK and 2 PyrD type B subunits. FMN serves as cofactor.

Its subcellular location is the cytoplasm. It catalyses the reaction (S)-dihydroorotate + NAD(+) = orotate + NADH + H(+). It participates in pyrimidine metabolism; UMP biosynthesis via de novo pathway; orotate from (S)-dihydroorotate (NAD(+) route): step 1/1. In terms of biological role, catalyzes the conversion of dihydroorotate to orotate with NAD(+) as electron acceptor. In Citrifermentans bemidjiense (strain ATCC BAA-1014 / DSM 16622 / JCM 12645 / Bem) (Geobacter bemidjiensis), this protein is Dihydroorotate dehydrogenase B (NAD(+)), catalytic subunit (pyrD).